We begin with the raw amino-acid sequence, 896 residues long: Zinc finger protein 574 (896 aa).

C2H2-type zinc fingers lie at residues 16 to 38 (YVCS…QNSH), 76 to 98 (YQCL…QELH), and 126 to 148 (YECV…RQTH). Position 164 is a phosphoserine (serine 164). The segment at 214–236 (YKCSECSQLFQLPADFLEHQATH) adopts a C2H2-type 4 zinc-finger fold. The segment covering 259–272 (VEVPVSQPEPVPSS) has biased composition (low complexity). The segment at 259–303 (VEVPVSQPEPVPSSDHSYELRNGEALGRDRRGRRARRNNSGEPGG) is disordered. Basic and acidic residues predominate over residues 274 to 287 (HSYELRNGEALGRD). Serine 298 carries the phosphoserine modification. 4 consecutive C2H2-type zinc fingers follow at residues 309-331 (LFCS…LRSH), 336-358 (FKCP…LGDH), 364-386 (FLCV…RRAH), and 392-413 (HSCP…RRTH). A disordered region spans residues 434 to 460 (FPEPAPAETGEPEAPEPPVAEESSAEP). 6 consecutive C2H2-type zinc fingers follow at residues 466 to 489 (YRCL…RFVH), 495 to 517 (HKCS…LRTH), 523 to 545 (FPCP…RLTH), 551 to 573 (YRCG…RLVH), 579 to 601 (YRCQ…RYHH), and 607 to 630 (YKCR…LVAH). The C2H2-type 15; degenerate zinc finger occupies 636-659 (HRCSSCGAAFPSSLRLREHRCAAA). Residues 667-689 (FECGTCGKKVGSAARLQAHEAAH) form a C2H2-type 16 zinc finger. The tract at residues 687 to 733 (AAHAAAGPGEVLAKEPPAPRAPRAARTPITSPTTLGSAAPAAPAAPA) is disordered. Positions 707–732 (APRAARTPITSPTTLGSAAPAAPAAP) are enriched in low complexity. Serine 717 is modified (phosphoserine). 4 consecutive C2H2-type zinc fingers follow at residues 738 to 760 (LECS…RRIH), 766 to 788 (YPCP…RRLH), 794 to 816 (FACE…RRIH), and 822 to 844 (YSCP…RKTH). Position 832 is an asymmetric dimethylarginine (arginine 832).

This sequence belongs to the krueppel C2H2-type zinc-finger protein family.

The protein localises to the nucleus. May be involved in transcriptional regulation. In Bos taurus (Bovine), this protein is Zinc finger protein 574 (ZNF574).